We begin with the raw amino-acid sequence, 429 residues long: Methylenetetrahydrofolate--tRNA-(uracil-5-)-methyltransferase TrmFO (429 aa).

Residue 7–12 (GAGLAG) coordinates FAD.

The protein belongs to the MnmG family. TrmFO subfamily. FAD serves as cofactor.

It localises to the cytoplasm. The enzyme catalyses uridine(54) in tRNA + (6R)-5,10-methylene-5,6,7,8-tetrahydrofolate + NADH + H(+) = 5-methyluridine(54) in tRNA + (6S)-5,6,7,8-tetrahydrofolate + NAD(+). It catalyses the reaction uridine(54) in tRNA + (6R)-5,10-methylene-5,6,7,8-tetrahydrofolate + NADPH + H(+) = 5-methyluridine(54) in tRNA + (6S)-5,6,7,8-tetrahydrofolate + NADP(+). Catalyzes the folate-dependent formation of 5-methyl-uridine at position 54 (M-5-U54) in all tRNAs. This Thermosipho melanesiensis (strain DSM 12029 / CIP 104789 / BI429) protein is Methylenetetrahydrofolate--tRNA-(uracil-5-)-methyltransferase TrmFO.